A 167-amino-acid chain; its full sequence is L-alanine exporter AlaE (167 aa).

A run of 4 helical transmembrane segments spans residues 25–45 (GTEF…TGII), 50–70 (IAGM…ALMI), 105–125 (FQVP…GGLV), and 129–149 (LGAA…LNWV).

It belongs to the AlaE exporter family.

Its subcellular location is the cell inner membrane. Its function is as follows. Exports L-alanine. This Pantoea sp. (strain At-9b) protein is L-alanine exporter AlaE.